A 357-amino-acid chain; its full sequence is Guanine nucleotide-binding protein alpha-2 subunit (357 aa).

Glycine 2 carries N-myristoyl glycine lipidation. Residue cysteine 4 is the site of S-palmitoyl cysteine attachment. The G-alpha domain occupies 30–356 (NEVKLLLLGA…TQCVMKAGLY (327 aa)). A G1 motif region spans residues 33-46 (KLLLLGAGESGKST). Positions 41, 42, 43, 44, 45, and 46 each coordinate GTP. Position 45 (serine 45) interacts with Mg(2+). Serine 113 carries the phosphoserine modification. The GTP site is built by aspartate 154, leucine 179, threonine 185, glycine 207, asparagine 272, lysine 273, aspartate 275, and alanine 328. The G2 motif stretch occupies residues 177-185 (DILHTRVMT). Threonine 185 provides a ligand contact to Mg(2+). A G3 motif region spans residues 200-209 (FRLVDVGGQR). A G4 motif region spans residues 268 to 275 (ILFLNKSD). Residues 326-331 (TCATDT) form a G5 motif region.

It belongs to the G-alpha family. As to quaternary structure, g proteins are composed of 3 units; alpha, beta and gamma. The alpha chain contains the guanine nucleotide binding site. Interacts with the RAP guanine nucleotide exchange factor glfB. The cofactor is Mg(2+). Post-translationally, ser-113 is transiently phosphorylated following stimulation with extracellular cAMP.

Guanine nucleotide-binding proteins (G proteins) are involved as modulators or transducers in various transmembrane signaling systems. G alpha-2 is required for the early aggregation process and most of the known cAMP receptor-mediated responses. Interacts with downstream effector gflB, a Rap guanine nucleotide exchange factor, to regulate the balance between Ras and Rap signaling at the leading edge of chemotaxing cells. The polypeptide is Guanine nucleotide-binding protein alpha-2 subunit (gpaB) (Dictyostelium discoideum (Social amoeba)).